A 361-amino-acid chain; its full sequence is Phospho-N-acetylmuramoyl-pentapeptide-transferase (361 aa).

The next 10 membrane-spanning stretches (helical) occupy residues 26–46, 71–91, 97–117, 134–154, 168–188, 200–220, 236–256, 264–284, 290–310, and 338–358; these read AGGA…CIIE, TPTM…FLWA, FILW…CDDY, IFGQ…FPSN, GFFI…IVGS, GLAI…AYFA, GAGE…GFLW, IFMG…VSLF, VLVL…IQIF, and KVTV…FASL.

It belongs to the glycosyltransferase 4 family. MraY subfamily. Mg(2+) is required as a cofactor.

Its subcellular location is the cell membrane. It carries out the reaction UDP-N-acetyl-alpha-D-muramoyl-L-alanyl-gamma-D-glutamyl-meso-2,6-diaminopimeloyl-D-alanyl-D-alanine + di-trans,octa-cis-undecaprenyl phosphate = di-trans,octa-cis-undecaprenyl diphospho-N-acetyl-alpha-D-muramoyl-L-alanyl-D-glutamyl-meso-2,6-diaminopimeloyl-D-alanyl-D-alanine + UMP. Its pathway is cell wall biogenesis; peptidoglycan biosynthesis. Its function is as follows. Catalyzes the initial step of the lipid cycle reactions in the biosynthesis of the cell wall peptidoglycan: transfers peptidoglycan precursor phospho-MurNAc-pentapeptide from UDP-MurNAc-pentapeptide onto the lipid carrier undecaprenyl phosphate, yielding undecaprenyl-pyrophosphoryl-MurNAc-pentapeptide, known as lipid I. The polypeptide is Phospho-N-acetylmuramoyl-pentapeptide-transferase (Endomicrobium trichonymphae).